A 297-amino-acid chain; its full sequence is Formamidopyrimidine-DNA glycosylase (297 aa).

The Schiff-base intermediate with DNA role is filled by P2. E3 functions as the Proton donor in the catalytic mechanism. K61 serves as the catalytic Proton donor; for beta-elimination activity. R120 and R176 together coordinate DNA. The FPG-type zinc finger occupies 262 to 296; sequence HVYGRQGQPCDRCGTAIVRESFMNRGSHFCPRCQR. R286 (proton donor; for delta-elimination activity) is an active-site residue.

This sequence belongs to the FPG family. Monomer. Requires Zn(2+) as cofactor.

The catalysed reaction is Hydrolysis of DNA containing ring-opened 7-methylguanine residues, releasing 2,6-diamino-4-hydroxy-5-(N-methyl)formamidopyrimidine.. The enzyme catalyses 2'-deoxyribonucleotide-(2'-deoxyribose 5'-phosphate)-2'-deoxyribonucleotide-DNA = a 3'-end 2'-deoxyribonucleotide-(2,3-dehydro-2,3-deoxyribose 5'-phosphate)-DNA + a 5'-end 5'-phospho-2'-deoxyribonucleoside-DNA + H(+). Involved in base excision repair of DNA damaged by oxidation or by mutagenic agents. Acts as a DNA glycosylase that recognizes and removes damaged bases. Has a preference for oxidized purines, such as 7,8-dihydro-8-oxoguanine (8-oxoG). Has AP (apurinic/apyrimidinic) lyase activity and introduces nicks in the DNA strand. Cleaves the DNA backbone by beta-delta elimination to generate a single-strand break at the site of the removed base with both 3'- and 5'-phosphates. The polypeptide is Formamidopyrimidine-DNA glycosylase (Leifsonia xyli subsp. xyli (strain CTCB07)).